We begin with the raw amino-acid sequence, 474 residues long: Sialyltransferase-like protein 1 (474 aa).

Residues 1–14 lie on the Cytoplasmic side of the membrane; the sequence is MRSHQAGRKLPLLQ. A helical; Signal-anchor for type II membrane protein membrane pass occupies residues 15-35; it reads LLGCVAVFSVFVFTIQSSFFA. Residues 36–474 are Lumenal-facing; sequence DNNRKLDLQP…CVRHPLKLDT (439 aa). Residues Asn88, Asn120, Asn155, and Asn243 are each glycosylated (N-linked (GlcNAc...) asparagine). The disordered stretch occupies residues 376-421; it reads RLQRSQQPTSSKRDGSGQFGNCKVWGDADPTKGPVSGSPDMSETRK.

It belongs to the glycosyltransferase 29 family. As to expression, highly expressed in inflorescences and siliques and at lower levels in roots, leaves and stems.

The protein localises to the golgi apparatus membrane. In terms of biological role, required for normal pollen grain germination and pollen tube growth. May not be required for pollen development and female gametophytic function. The sequence is that of Sialyltransferase-like protein 1 from Arabidopsis thaliana (Mouse-ear cress).